Reading from the N-terminus, the 105-residue chain is UPF0145 protein LPC_0273 (105 aa).

The protein belongs to the UPF0145 family.

The sequence is that of UPF0145 protein LPC_0273 from Legionella pneumophila (strain Corby).